The primary structure comprises 124 residues: Small polypeptide ROTUNDIFOLIA LIKE 3 (124 aa).

Positions 1–23 (MEDERWKLSSSKGRSKSGRSCSS) are disordered. Residues N35 and N38 are each glycosylated (N-linked (GlcNAc...) asparagine). Residues 59 to 75 (AWSAAGAGGGGASSSSS) form a helical membrane-spanning segment. The disordered stretch occupies residues 60-95 (WSAAGAGGGGASSSSSSQHQHQQQQQQSNNSQRLSK). Low complexity predominate over residues 71-91 (SSSSSSQHQHQQQQQQSNNSQ). N88 is a glycosylation site (N-linked (GlcNAc...) asparagine). The required for DVL/RTFL small polypeptide activity stretch occupies residues 92–124 (RLSKKCVEAVKEHRARFYIVRRCVSMLVCWRDY).

The protein belongs to the DVL/RTFL small polypeptides family.

The protein resides in the cell membrane. Small polypeptide acting as a regulatory molecule which coordinates cellular responses required for differentiation, growth and development, probably by restricting polar cell proliferation in lateral organs (e.g. leaves and petioles). This is Small polypeptide ROTUNDIFOLIA LIKE 3 from Oryza sativa subsp. japonica (Rice).